The primary structure comprises 1178 residues: Phytochrome B (1178 aa).

Over residues 1 to 15 (MASGSRATPTRSPSS) the composition is skewed to polar residues. Residues 1 to 58 (MASGSRATPTRSPSSARPEAPRHAHHHHHHHSQSSGGSTSRAGGGGGGGGGGGGTAAT) are disordered. Over residues 23-32 (HAHHHHHHHS) the composition is skewed to basic residues. Over residues 42–55 (AGGGGGGGGGGGGT) the composition is skewed to gly residues. A GAF domain is found at 267-449 (DIKLLCDTVV…AFGLQLNMEL (183 aa)). C372 provides a ligand contact to phytochromobilin. PAS domains lie at 668–739 (VARE…LRGE) and 802–873 (DYKA…MVVI). In terms of domain architecture, Histidine kinase spans 950–1170 (YICQEIKNPL…LIVLELPQPR (221 aa)).

The protein belongs to the phytochrome family. In terms of assembly, homodimer. Post-translationally, contains one covalently linked phytochromobilin chromophore.

Functionally, regulatory photoreceptor which exists in two forms that are reversibly interconvertible by light: the Pr form that absorbs maximally in the red region of the spectrum and the Pfr form that absorbs maximally in the far-red region. Photoconversion of Pr to Pfr induces an array of morphogenic responses, whereas reconversion of Pfr to Pr cancels the induction of those responses. Pfr controls the expression of a number of nuclear genes including those encoding the small subunit of ribulose-bisphosphate carboxylase, chlorophyll A/B binding protein, protochlorophyllide reductase, rRNA, etc. It also controls the expression of its own gene(s) in a negative feedback fashion. The polypeptide is Phytochrome B (PHYB) (Sorghum bicolor (Sorghum)).